Reading from the N-terminus, the 235-residue chain is Putative N-acetylmannosamine-6-phosphate 2-epimerase (235 aa).

It belongs to the NanE family.

It carries out the reaction an N-acyl-D-glucosamine 6-phosphate = an N-acyl-D-mannosamine 6-phosphate. It participates in amino-sugar metabolism; N-acetylneuraminate degradation; D-fructose 6-phosphate from N-acetylneuraminate: step 3/5. In terms of biological role, converts N-acetylmannosamine-6-phosphate (ManNAc-6-P) to N-acetylglucosamine-6-phosphate (GlcNAc-6-P). The protein is Putative N-acetylmannosamine-6-phosphate 2-epimerase of Aliivibrio fischeri (strain ATCC 700601 / ES114) (Vibrio fischeri).